A 348-amino-acid polypeptide reads, in one-letter code: UDP-3-O-acylglucosamine N-acyltransferase (348 aa).

Residue His241 is the Proton acceptor of the active site.

This sequence belongs to the transferase hexapeptide repeat family. LpxD subfamily. Homotrimer.

The catalysed reaction is a UDP-3-O-[(3R)-3-hydroxyacyl]-alpha-D-glucosamine + a (3R)-hydroxyacyl-[ACP] = a UDP-2-N,3-O-bis[(3R)-3-hydroxyacyl]-alpha-D-glucosamine + holo-[ACP] + H(+). It participates in bacterial outer membrane biogenesis; LPS lipid A biosynthesis. In terms of biological role, catalyzes the N-acylation of UDP-3-O-acylglucosamine using 3-hydroxyacyl-ACP as the acyl donor. Is involved in the biosynthesis of lipid A, a phosphorylated glycolipid that anchors the lipopolysaccharide to the outer membrane of the cell. The polypeptide is UDP-3-O-acylglucosamine N-acyltransferase (Neisseria meningitidis serogroup C (strain 053442)).